The chain runs to 497 residues: Aldehyde dehydrogenase (497 aa).

An NAD(+)-binding site is contributed by 242–247 (GSTLVG). The active-site Proton acceptor is the Glu265. Residue Cys299 is the Nucleophile of the active site.

Belongs to the aldehyde dehydrogenase family.

It carries out the reaction an aldehyde + NAD(+) + H2O = a carboxylate + NADH + 2 H(+). It functions in the pathway alcohol metabolism; ethanol degradation; acetate from ethanol: step 2/2. This is Aldehyde dehydrogenase (aldA) from Aspergillus niger.